Reading from the N-terminus, the 149-residue chain is Calmodulin (149 aa).

At Ala2 the chain carries N-acetylalanine. 4 EF-hand domains span residues 8-43 (EQIA…LGQN), 44-79 (PTEA…KMKD), 81-116 (DSEE…LGEK), and 117-149 (LTDE…MMSK). Ca(2+) is bound by residues Asp21, Asp23, Asp25, Thr27, Glu32, Asp57, Asp59, Asn61, Thr63, Glu68, Asp94, Asp96, Asn98, and Glu105. N6,N6,N6-trimethyllysine is present on Lys116. Asp130, Asp132, Asp134, Gln136, and Glu141 together coordinate Ca(2+).

The protein belongs to the calmodulin family.

In terms of biological role, calmodulin mediates the control of a large number of enzymes, ion channels and other proteins by Ca(2+). Among the enzymes to be stimulated by the calmodulin-Ca(2+) complex are a number of protein kinases and phosphatases. The protein is Calmodulin (cam) of Saccharina japonica (Sweet kelp).